A 300-amino-acid chain; its full sequence is UDP-N-acetylenolpyruvoylglucosamine reductase (300 aa).

Residues 30 to 194 (RVGGPADFFV…IGATFVLDSD (165 aa)) enclose the FAD-binding PCMH-type domain. Arg174 is a catalytic residue. The active-site Proton donor is Ser223. Residue Glu293 is part of the active site.

It belongs to the MurB family. Requires FAD as cofactor.

It localises to the cytoplasm. The enzyme catalyses UDP-N-acetyl-alpha-D-muramate + NADP(+) = UDP-N-acetyl-3-O-(1-carboxyvinyl)-alpha-D-glucosamine + NADPH + H(+). It functions in the pathway cell wall biogenesis; peptidoglycan biosynthesis. Functionally, cell wall formation. This Geobacter sulfurreducens (strain ATCC 51573 / DSM 12127 / PCA) protein is UDP-N-acetylenolpyruvoylglucosamine reductase.